The chain runs to 119 residues: Holo-[acyl-carrier-protein] synthase (119 aa).

Asp-8 and Glu-58 together coordinate Mg(2+).

The protein belongs to the P-Pant transferase superfamily. AcpS family. The cofactor is Mg(2+).

The protein resides in the cytoplasm. It catalyses the reaction apo-[ACP] + CoA = holo-[ACP] + adenosine 3',5'-bisphosphate + H(+). In terms of biological role, transfers the 4'-phosphopantetheine moiety from coenzyme A to a Ser of acyl-carrier-protein. This chain is Holo-[acyl-carrier-protein] synthase, found in Limosilactobacillus fermentum (strain NBRC 3956 / LMG 18251) (Lactobacillus fermentum).